We begin with the raw amino-acid sequence, 248 residues long: Triosephosphate isomerase (248 aa).

Position 9 to 11 (9 to 11 (NWK)) interacts with substrate. His-94 serves as the catalytic Electrophile. Glu-166 (proton acceptor) is an active-site residue. Substrate contacts are provided by residues Gly-172, Ser-212, and 233–234 (GG).

This sequence belongs to the triosephosphate isomerase family. In terms of assembly, homodimer.

It localises to the cytoplasm. It carries out the reaction D-glyceraldehyde 3-phosphate = dihydroxyacetone phosphate. It participates in carbohydrate biosynthesis; gluconeogenesis. The protein operates within carbohydrate degradation; glycolysis; D-glyceraldehyde 3-phosphate from glycerone phosphate: step 1/1. Involved in the gluconeogenesis. Catalyzes stereospecifically the conversion of dihydroxyacetone phosphate (DHAP) to D-glyceraldehyde-3-phosphate (G3P). In Clostridium perfringens (strain ATCC 13124 / DSM 756 / JCM 1290 / NCIMB 6125 / NCTC 8237 / Type A), this protein is Triosephosphate isomerase.